The chain runs to 231 residues: Ribonuclease 3 (231 aa).

The region spanning 7–135 is the RNase III domain; the sequence is IQAIESKLNF…ILGAVYLDGG (129 aa). Glu48 serves as a coordination point for Mg(2+). Asp52 is an active-site residue. Mg(2+) contacts are provided by Asn121 and Glu124. The active site involves Glu124. In terms of domain architecture, DRBM spans 160 to 229; the sequence is NPKNRLQQFT…AKQALSTHDN (70 aa).

Belongs to the ribonuclease III family. Homodimer. Requires Mg(2+) as cofactor.

The protein localises to the cytoplasm. The catalysed reaction is Endonucleolytic cleavage to 5'-phosphomonoester.. Its function is as follows. Digests double-stranded RNA. Involved in the processing of primary rRNA transcript to yield the immediate precursors to the large and small rRNAs (23S and 16S). Processes some mRNAs, and tRNAs when they are encoded in the rRNA operon. Processes pre-crRNA and tracrRNA of type II CRISPR loci if present in the organism. This is Ribonuclease 3 from Chlamydia trachomatis serovar A (strain ATCC VR-571B / DSM 19440 / HAR-13).